A 129-amino-acid chain; its full sequence is Type II secretion system protein I (129 aa).

Residues 1–6 (MKRARG) constitute a propeptide, leader sequence. Phe-7 carries the post-translational modification N-methylphenylalanine. A helical membrane pass occupies residues 7 to 27 (FTLLEVLVALAIFAMVAASVL).

This sequence belongs to the GSP I family. As to quaternary structure, type II secretion is composed of four main components: the outer membrane complex, the inner membrane complex, the cytoplasmic secretion ATPase and the periplasm-spanning pseudopilus. Forms the tip of the type II pseudopilus by interacting with XcpU, XcpW and XcpX. Interacts with core component XcpT. Post-translationally, cleaved by prepilin peptidase. In terms of processing, methylated by prepilin peptidase at the amino group of the N-terminal phenylalanine once the leader sequence is cleaved by prepilin peptidase.

Its subcellular location is the cell inner membrane. In terms of biological role, component of the type II secretion system required for the energy-dependent secretion of extracellular factors such as proteases and toxins from the periplasm. Part of the pseudopilus tip complex that is critical for the recognition and binding of secretion substrates. Type II pseudopilus confers increased bacterial adhesive capabilities. This chain is Type II secretion system protein I (xcpV), found in Pseudomonas aeruginosa (strain ATCC 15692 / DSM 22644 / CIP 104116 / JCM 14847 / LMG 12228 / 1C / PRS 101 / PAO1).